Consider the following 445-residue polypeptide: Fasciclin-like arabinogalactan protein 16 (445 aa).

The signal sequence occupies residues 1–23 (MDSSYGATKFLLLLFLTTSIATA). FAS1 domains follow at residues 35-173 (NSNS…ERLL) and 257-400 (VKDF…DGVL). N-linked (GlcNAc...) asparagine glycosylation is found at Asn-72 and Asn-279.

This sequence belongs to the fasciclin-like AGP family.

Its subcellular location is the secreted. May be a cell surface adhesion protein. The polypeptide is Fasciclin-like arabinogalactan protein 16 (FLA16) (Arabidopsis thaliana (Mouse-ear cress)).